The chain runs to 257 residues: UPF0246 protein BPP3440 (257 aa).

It belongs to the UPF0246 family.

The sequence is that of UPF0246 protein BPP3440 from Bordetella parapertussis (strain 12822 / ATCC BAA-587 / NCTC 13253).